A 434-amino-acid chain; its full sequence is CinA-like protein (434 aa).

It belongs to the CinA family.

The chain is CinA-like protein from Mycobacterium avium (strain 104).